We begin with the raw amino-acid sequence, 195 residues long: Imidazoleglycerol-phosphate dehydratase (195 aa).

It belongs to the imidazoleglycerol-phosphate dehydratase family.

It localises to the cytoplasm. It catalyses the reaction D-erythro-1-(imidazol-4-yl)glycerol 3-phosphate = 3-(imidazol-4-yl)-2-oxopropyl phosphate + H2O. It participates in amino-acid biosynthesis; L-histidine biosynthesis; L-histidine from 5-phospho-alpha-D-ribose 1-diphosphate: step 6/9. The polypeptide is Imidazoleglycerol-phosphate dehydratase (Burkholderia mallei (strain NCTC 10247)).